The following is a 170-amino-acid chain: tRNA-splicing endonuclease (170 aa).

Active-site residues include Tyr106, His116, and Lys147.

It belongs to the tRNA-intron endonuclease family. Archaeal short subfamily. Homotetramer; although the tetramer contains four active sites, only two participate in the cleavage. Therefore, it should be considered as a dimer of dimers.

The catalysed reaction is pretRNA = a 3'-half-tRNA molecule with a 5'-OH end + a 5'-half-tRNA molecule with a 2',3'-cyclic phosphate end + an intron with a 2',3'-cyclic phosphate and a 5'-hydroxyl terminus.. In terms of biological role, endonuclease that removes tRNA introns. Cleaves pre-tRNA at the 5'- and 3'-splice sites to release the intron. The products are an intron and two tRNA half-molecules bearing 2',3' cyclic phosphate and 5'-OH termini. Recognizes a pseudosymmetric substrate in which 2 bulged loops of 3 bases are separated by a stem of 4 bp. This chain is tRNA-splicing endonuclease, found in Methanothermobacter thermautotrophicus (strain ATCC 29096 / DSM 1053 / JCM 10044 / NBRC 100330 / Delta H) (Methanobacterium thermoautotrophicum).